Consider the following 350-residue polypeptide: Protein-glutamate methylesterase/protein-glutamine glutaminase 2 (350 aa).

A Response regulatory domain is found at 3–121 (RVLLVDDSPV…DPDYEEAVSE (119 aa)). Asp-54 is modified (4-aspartylphosphate). The CheB-type methylesterase domain maps to 158-322 (IHQDIRVIVI…SFVYGMPGAA (165 aa)). Active-site residues include Ser-170, His-197, and Asp-290.

It belongs to the CheB family. Phosphorylated by CheA. Phosphorylation of the N-terminal regulatory domain activates the methylesterase activity.

The protein localises to the cytoplasm. It catalyses the reaction [protein]-L-glutamate 5-O-methyl ester + H2O = L-glutamyl-[protein] + methanol + H(+). The enzyme catalyses L-glutaminyl-[protein] + H2O = L-glutamyl-[protein] + NH4(+). In terms of biological role, involved in chemotaxis. Part of a chemotaxis signal transduction system that modulates chemotaxis in response to various stimuli. Catalyzes the demethylation of specific methylglutamate residues introduced into the chemoreceptors (methyl-accepting chemotaxis proteins or MCP) by CheR. Also mediates the irreversible deamidation of specific glutamine residues to glutamic acid. The polypeptide is Protein-glutamate methylesterase/protein-glutamine glutaminase 2 (Methanospirillum hungatei JF-1 (strain ATCC 27890 / DSM 864 / NBRC 100397 / JF-1)).